The primary structure comprises 80 residues: Clavaspirin (80 aa).

An N-terminal signal peptide occupies residues 1–17 (MKTIILILLILGLGIDA). Positions 18-29 (KSLEESKADEEK) are excised as a propeptide. At L52 the chain carries Leucine amide. Residues 53 to 80 (GDDQQDNGKFYGYYAEDNGKHWYDTGDQ) constitute a propeptide that is removed on maturation.

Pharyngeal tissues and hemocytes.

The protein localises to the secreted. In terms of biological role, exhibits broad-spectrum antimicrobial activity against both Gram-positive and Gram-negative bacteria. Has potent hemolytic activity. This chain is Clavaspirin, found in Styela clava (Sea squirt).